The chain runs to 691 residues: Elongation factor G (691 aa).

The tr-type G domain maps to 8–282; that stretch reads ERVRNIGIAA…AVVNYLPAPV (275 aa). GTP contacts are provided by residues 17-24, 81-85, and 135-138; these read AHIDAGKT, DTPGH, and NKMD.

Belongs to the TRAFAC class translation factor GTPase superfamily. Classic translation factor GTPase family. EF-G/EF-2 subfamily.

The protein localises to the cytoplasm. Catalyzes the GTP-dependent ribosomal translocation step during translation elongation. During this step, the ribosome changes from the pre-translocational (PRE) to the post-translocational (POST) state as the newly formed A-site-bound peptidyl-tRNA and P-site-bound deacylated tRNA move to the P and E sites, respectively. Catalyzes the coordinated movement of the two tRNA molecules, the mRNA and conformational changes in the ribosome. This chain is Elongation factor G, found in Prochlorococcus marinus (strain NATL1A).